Here is a 132-residue protein sequence, read N- to C-terminus: MLTDRKFVVKTTLDLQDDISSVCCSPCNRYIIIASGNNCQHIYYLCATNLEILFKFKAHDDSIVHLVSTLDGKYIVSSGLDGLIKIWNFKTANLANVLPKRDVRRMKFDVMENMWLDIAESIDISFDEIWQS.

WD repeat units lie at residues 14 to 53 and 58 to 97; these read DLQDDISSVCCSPCNRYIIIASGNNCQHIYYLCATNLEIL and AHDDSIVHLVSTLDGKYIVSSGLDGLIKIWNFKTANLANV.

This is an uncharacterized protein from Acanthamoeba polyphaga (Amoeba).